Here is a 96-residue protein sequence, read N- to C-terminus: Large ribosomal subunit protein bL27 (96 aa).

Positions 13–33 (KGGGSTANGRNSAGRRLGAKA) are disordered.

This sequence belongs to the bacterial ribosomal protein bL27 family.

The polypeptide is Large ribosomal subunit protein bL27 (Lactobacillus acidophilus (strain ATCC 700396 / NCK56 / N2 / NCFM)).